We begin with the raw amino-acid sequence, 287 residues long: tRNA pseudouridine synthase B (287 aa).

Asp38 functions as the Nucleophile in the catalytic mechanism.

The protein belongs to the pseudouridine synthase TruB family. Type 1 subfamily.

The catalysed reaction is uridine(55) in tRNA = pseudouridine(55) in tRNA. Its function is as follows. Responsible for synthesis of pseudouridine from uracil-55 in the psi GC loop of transfer RNAs. The polypeptide is tRNA pseudouridine synthase B (Fusobacterium nucleatum subsp. nucleatum (strain ATCC 25586 / DSM 15643 / BCRC 10681 / CIP 101130 / JCM 8532 / KCTC 2640 / LMG 13131 / VPI 4355)).